The primary structure comprises 174 residues: DNA replication inhibitor plutonium (174 aa).

ANK repeat units lie at residues 39 to 68 (YGNT…NIFA) and 72 to 103 (FGQN…DFNL). Threonine 167 carries the post-translational modification Phosphothreonine.

Functionally, inhibits DNA replication early in developments. May bind and block the action of a replication or initiation factor. The sequence is that of DNA replication inhibitor plutonium (plu) from Drosophila melanogaster (Fruit fly).